Consider the following 459-residue polypeptide: ATP synthase subunit beta (459 aa).

Residue 149–156 coordinates ATP; it reads GGAGVGKT.

The protein belongs to the ATPase alpha/beta chains family. In terms of assembly, F-type ATPases have 2 components, CF(1) - the catalytic core - and CF(0) - the membrane proton channel. CF(1) has five subunits: alpha(3), beta(3), gamma(1), delta(1), epsilon(1). CF(0) has three main subunits: a(1), b(2) and c(9-12). The alpha and beta chains form an alternating ring which encloses part of the gamma chain. CF(1) is attached to CF(0) by a central stalk formed by the gamma and epsilon chains, while a peripheral stalk is formed by the delta and b chains.

The protein resides in the cell inner membrane. The catalysed reaction is ATP + H2O + 4 H(+)(in) = ADP + phosphate + 5 H(+)(out). Functionally, produces ATP from ADP in the presence of a proton gradient across the membrane. The catalytic sites are hosted primarily by the beta subunits. This chain is ATP synthase subunit beta, found in Pseudomonas syringae pv. syringae (strain B728a).